We begin with the raw amino-acid sequence, 388 residues long: Norsolorinic acid reductase (388 aa).

The active-site Proton donor is Tyr-74. Residue 233–243 (GVLGRGQFRSA) participates in NADP(+) binding.

Belongs to the aldo/keto reductase family. Aldo/keto reductase 2 subfamily.

It functions in the pathway mycotoxin biosynthesis; aflatoxin biosynthesis. This chain is Norsolorinic acid reductase (norA), found in Aspergillus flavus (strain ATCC 200026 / FGSC A1120 / IAM 13836 / NRRL 3357 / JCM 12722 / SRRC 167).